Here is a 383-residue protein sequence, read N- to C-terminus: MTTTKTNLLDFDRKGLRAFFSEELGEKAFRADQIMKWMYHFGCDDFDQMNNINKKLREKLKQKCEIRAPYVSEAQHSVDGTIKWAMKVGDQDVETVYIPDGDRATLCVSSQVGCALACTFCSTAQQGFNRNLKVSEIVGQIWRAAREIGLEKETGRRPITNVVMMGMGEPLLNMKNLMPSLDIMLDDLGFGLSKRRVTVSTSGVVSGLEQMIGKVDVALAISLHAPTDKLRSEIMPINDRWNIEAFLACVREYIASSNANRGRVTVEYVLLDHINDDMDHARQLAELLKDTPAKINLIPFNPYPGSPYKKPSNSRIDRFMKTLMEYDFTVTVRRTRGDDIDAACGQLVGDVIDRTKRTQVKQQGEAIPVKLFNLDVLQQGKAE.

Glutamate 94 acts as the Proton acceptor in catalysis. A Radical SAM core domain is found at 100-339; sequence DGDRATLCVS…VTVRRTRGDD (240 aa). Cysteine 107 and cysteine 344 form a disulfide bridge. Cysteine 114, cysteine 118, and cysteine 121 together coordinate [4Fe-4S] cluster. S-adenosyl-L-methionine is bound by residues 168 to 169, serine 200, 222 to 224, and asparagine 301; these read GE and SLH. Residue cysteine 344 is the S-methylcysteine intermediate of the active site.

The protein belongs to the radical SAM superfamily. RlmN family. [4Fe-4S] cluster is required as a cofactor.

Its subcellular location is the cytoplasm. It carries out the reaction adenosine(2503) in 23S rRNA + 2 reduced [2Fe-2S]-[ferredoxin] + 2 S-adenosyl-L-methionine = 2-methyladenosine(2503) in 23S rRNA + 5'-deoxyadenosine + L-methionine + 2 oxidized [2Fe-2S]-[ferredoxin] + S-adenosyl-L-homocysteine. The catalysed reaction is adenosine(37) in tRNA + 2 reduced [2Fe-2S]-[ferredoxin] + 2 S-adenosyl-L-methionine = 2-methyladenosine(37) in tRNA + 5'-deoxyadenosine + L-methionine + 2 oxidized [2Fe-2S]-[ferredoxin] + S-adenosyl-L-homocysteine. In terms of biological role, specifically methylates position 2 of adenine 2503 in 23S rRNA and position 2 of adenine 37 in tRNAs. m2A2503 modification seems to play a crucial role in the proofreading step occurring at the peptidyl transferase center and thus would serve to optimize ribosomal fidelity. The protein is Dual-specificity RNA methyltransferase RlmN of Aliivibrio salmonicida (strain LFI1238) (Vibrio salmonicida (strain LFI1238)).